A 139-amino-acid chain; its full sequence is Holo-[acyl-carrier-protein] synthase (139 aa).

Positions 8 and 61 each coordinate Mg(2+).

The protein belongs to the P-Pant transferase superfamily. AcpS family. Mg(2+) serves as cofactor.

Its subcellular location is the cytoplasm. The catalysed reaction is apo-[ACP] + CoA = holo-[ACP] + adenosine 3',5'-bisphosphate + H(+). Its function is as follows. Transfers the 4'-phosphopantetheine moiety from coenzyme A to a Ser of acyl-carrier-protein. The chain is Holo-[acyl-carrier-protein] synthase from Rhodopseudomonas palustris (strain BisA53).